The sequence spans 504 residues: L-carnitine/gamma-butyrobetaine antiporter (504 aa).

The next 12 membrane-spanning stretches (helical) occupy residues 10–30 (IEPK…WLTV), 51–71 (WGWA…WLVF), 92–112 (IFMM…SIEI), 143–163 (GPLP…FFFV), 195–215 (FYLV…TPLV), 231–251 (LDAI…ACGL), 263–283 (SYLS…SFIM), 316–336 (WTVF…IFLA), 347–367 (LCFG…TVLG), 398–418 (WAAL…CFIA), 446–466 (LLVR…LLAL), and 475–495 (AIIA…LSFI).

This sequence belongs to the BCCT transporter (TC 2.A.15) family. CaiT subfamily. As to quaternary structure, homotrimer.

It is found in the cell inner membrane. The catalysed reaction is 4-(trimethylamino)butanoate(in) + (R)-carnitine(out) = 4-(trimethylamino)butanoate(out) + (R)-carnitine(in). Its pathway is amine and polyamine metabolism; carnitine metabolism. In terms of biological role, catalyzes the exchange of L-carnitine for gamma-butyrobetaine. The chain is L-carnitine/gamma-butyrobetaine antiporter from Escherichia coli O81 (strain ED1a).